The following is a 252-amino-acid chain: Pre-rRNA-processing protein pno1 (252 aa).

Residues 1-57 form a disordered region; it reads MPAPTALLRKSDEPLSAEEPSLTFSSDAQASGQGEAPSPIPTESAQHSDMRIDEESR. Over residues 22-32 the composition is skewed to polar residues; that stretch reads LTFSSDAQASG. A compositionally biased stretch (basic and acidic residues) spans 46–57; that stretch reads QHSDMRIDEESR. Residues 173 to 225 enclose the KH domain; it reads GEHLSRAIGRIAGKDGKTKFAIENASRTRVVLQGTKVTILGRFRDLGIAQEAI.

This sequence belongs to the PNO1 family. As to quaternary structure, component of the small ribosomal subunit, ribosomal RNA processing complex (SSU RRP complex).

It localises to the cytoplasm. The protein resides in the nucleus. Its subcellular location is the nucleolus. In terms of biological role, required for small ribosomal subunit (SSU) synthesis. Has a role in the processing of early nucleolar and late cytoplasmic pre-RNA species. The protein is Pre-rRNA-processing protein pno1 (pno1) of Aspergillus fumigatus (strain ATCC MYA-4609 / CBS 101355 / FGSC A1100 / Af293) (Neosartorya fumigata).